The sequence spans 194 residues: Thioredoxin O1, mitochondrial (194 aa).

A mitochondrion-targeting transit peptide spans 1-42; it reads MKGNWSIVRKVLHRQFSTLRSSTPSSRLSTSIRPLVLAPNSI. S75 bears the Phosphoserine mark. The region spanning 89–194 is the Thioredoxin domain; that stretch reads VKSEEEFINA…LKNLMEQLYK (106 aa). Residues C118 and C121 each act as nucleophile in the active site. C118 and C121 form a disulfide bridge.

This sequence belongs to the thioredoxin family. Plant O-type subfamily.

The protein resides in the mitochondrion matrix. In terms of biological role, thiol-disulfide oxidoreductase that may participate in various redox reactions. Possesses insulin disulfide bonds reducing activity. Reduced by thioredoxin reductases NTRA and NTRB. In Arabidopsis thaliana (Mouse-ear cress), this protein is Thioredoxin O1, mitochondrial.